A 151-amino-acid polypeptide reads, in one-letter code: Small ribosomal subunit protein uS15 (151 aa).

This sequence belongs to the universal ribosomal protein uS15 family. In terms of assembly, component of the small ribosomal subunit.

It localises to the cytoplasm. In terms of biological role, component of the small ribosomal subunit. The ribosome is a large ribonucleoprotein complex responsible for the synthesis of proteins in the cell. The sequence is that of Small ribosomal subunit protein uS15 (rps13) from Gillichthys mirabilis (Long-jawed mudsucker).